A 58-amino-acid polypeptide reads, in one-letter code: AGSYYSYRRRRCSPRRLYRLRRRRYRSSRRRRRRPCRRRRHRRVCRRVRRRRRCCRRR.

The disordered stretch occupies residues 20–41 (LRRRRYRSSRRRRRRPCRRRRH).

Belongs to the protamine P2 family. In terms of tissue distribution, testis.

The protein resides in the nucleus. It localises to the chromosome. Functionally, protamines substitute for histones in the chromatin of sperm during the haploid phase of spermatogenesis. They compact sperm DNA into a highly condensed, stable and inactive complex. This Equus caballus (Horse) protein is Sperm histone P2b.